Here is a 126-residue protein sequence, read N- to C-terminus: uncharacterized protein (126 aa).

This is an uncharacterized protein from Invertebrate iridescent virus 6 (IIV-6).